The primary structure comprises 78 residues: Large ribosomal subunit protein bL28 (78 aa).

Positions 1-25 (MSRVCQVTGKRPAVGNNRSHAKNAT) are disordered.

The protein belongs to the bacterial ribosomal protein bL28 family.

The chain is Large ribosomal subunit protein bL28 from Aliivibrio salmonicida (strain LFI1238) (Vibrio salmonicida (strain LFI1238)).